The sequence spans 368 residues: Alanine racemase (368 aa).

Catalysis depends on lysine 40, which acts as the Proton acceptor; specific for D-alanine. Position 40 is an N6-(pyridoxal phosphate)lysine (lysine 40). Arginine 134 contributes to the substrate binding site. Tyrosine 263 acts as the Proton acceptor; specific for L-alanine in catalysis. Substrate is bound at residue methionine 310.

This sequence belongs to the alanine racemase family. The cofactor is pyridoxal 5'-phosphate.

It carries out the reaction L-alanine = D-alanine. The protein operates within amino-acid biosynthesis; D-alanine biosynthesis; D-alanine from L-alanine: step 1/1. Functionally, catalyzes the interconversion of L-alanine and D-alanine. May also act on other amino acids. The protein is Alanine racemase (alr) of Listeria monocytogenes serovar 1/2a (strain ATCC BAA-679 / EGD-e).